Consider the following 319-residue polypeptide: Iron-sulfur cluster transfer protein NUBPL (319 aa).

The N-terminal 38 residues, 1-38 (MGTWRRLLLFGGVSLRGGGAATVPPRGCRALGCGRQLL), are a transit peptide targeting the mitochondrion. 75–82 (GKGGVGKS) is a binding site for ATP.

It belongs to the Mrp/NBP35 ATP-binding proteins family. [4Fe-4S] cluster serves as cofactor.

The protein localises to the mitochondrion. In terms of biological role, iron-sulfur cluster transfer protein involved in the assembly of the mitochondrial membrane respiratory chain NADH dehydrogenase (Complex I). May deliver one or more Fe-S clusters to complex I subunits. The sequence is that of Iron-sulfur cluster transfer protein NUBPL (Nubpl) from Mus musculus (Mouse).